The following is a 327-amino-acid chain: Annexin A8 (327 aa).

Annexin repeat units follow at residues 21–92 (FNPV…ALMY), 93–164 (PPYR…CLLQ), 177–249 (GLAL…TIVK), and 253–324 (NLHC…SLVG). Positions 266, 268, 270, and 310 each coordinate Ca(2+).

The protein belongs to the annexin family.

Its function is as follows. This protein is an anticoagulant protein that acts as an indirect inhibitor of the thromboplastin-specific complex, which is involved in the blood coagulation cascade. This is Annexin A8 (ANXA8) from Oryctolagus cuniculus (Rabbit).